Consider the following 433-residue polypeptide: Tol-Pal system protein TolB (433 aa).

A signal peptide spans 1–26; sequence MNKLRLFRSFFAFLLPFGMATGAAHG.

It belongs to the TolB family. In terms of assembly, the Tol-Pal system is composed of five core proteins: the inner membrane proteins TolA, TolQ and TolR, the periplasmic protein TolB and the outer membrane protein Pal. They form a network linking the inner and outer membranes and the peptidoglycan layer.

The protein resides in the periplasm. Its function is as follows. Part of the Tol-Pal system, which plays a role in outer membrane invagination during cell division and is important for maintaining outer membrane integrity. This chain is Tol-Pal system protein TolB, found in Methylobacillus flagellatus (strain ATCC 51484 / DSM 6875 / VKM B-1610 / KT).